A 180-amino-acid chain; its full sequence is Large ribosomal subunit protein uL5 (180 aa).

It belongs to the universal ribosomal protein uL5 family. As to quaternary structure, part of the 50S ribosomal subunit; part of the 5S rRNA/L5/L18/L25 subcomplex. Contacts the 5S rRNA and the P site tRNA. Forms a bridge to the 30S subunit in the 70S ribosome.

This is one of the proteins that bind and probably mediate the attachment of the 5S RNA into the large ribosomal subunit, where it forms part of the central protuberance. In the 70S ribosome it contacts protein S13 of the 30S subunit (bridge B1b), connecting the 2 subunits; this bridge is implicated in subunit movement. Contacts the P site tRNA; the 5S rRNA and some of its associated proteins might help stabilize positioning of ribosome-bound tRNAs. The sequence is that of Large ribosomal subunit protein uL5 from Chlamydia felis (strain Fe/C-56) (Chlamydophila felis).